Here is a 149-residue protein sequence, read N- to C-terminus: Urease accessory protein UreE (149 aa).

Belongs to the UreE family.

It localises to the cytoplasm. Involved in urease metallocenter assembly. Binds nickel. Probably functions as a nickel donor during metallocenter assembly. In Prochlorococcus marinus (strain AS9601), this protein is Urease accessory protein UreE.